Here is a 502-residue protein sequence, read N- to C-terminus: Adenylate cyclase (502 aa).

The Cytoplasmic segment spans residues 1 to 25 (MGDFCRRVDCKAMKFFALRSSIRTQ). A helical membrane pass occupies residues 26 to 46 (IMASTTLLILALIGAIVTVWA). The Lumenal, thylakoid segment spans residues 47–203 (KSESTLYHQE…RKVNLAVTNA (157 aa)). Residues 204–226 (VNQALVVGFAGLNIGWICAYFLA) form a helical membrane-spanning segment. The region spanning 227–280 (QHLSDPVRRLQISVAKIAGGDLQHRADIHSRADEIGALATSVNEMSAALQISFN) is the HAMP domain. The Cytoplasmic portion of the chain corresponds to 227-502 (QHLSDPVRRL…EAISIYEVKA (276 aa)). Positions 320-451 (TILFCDIRGY…DAVNVASRIE (132 aa)) constitute a Guanylate cyclase domain. D325 and D369 together coordinate Mg(2+).

It belongs to the adenylyl cyclase class-3 family. Requires Mg(2+) as cofactor.

The protein localises to the cellular thylakoid membrane. The catalysed reaction is ATP = 3',5'-cyclic AMP + diphosphate. Its function is as follows. May function as a membrane-localized receptor protein. The polypeptide is Adenylate cyclase (cya) (Anabaena cylindrica).